The chain runs to 1848 residues: Histone-lysine N-methyltransferase, H3 lysine-79 specific (1848 aa).

The region spanning 19-336 (DVISFAWPLQ…ILERYFQRLK (318 aa)) is the DOT1 domain. S-adenosyl-L-methionine is bound by residues 142–145 (YGET), 165–174 (FIDLGSGVGQ), E192, and 228–229 (DF). Disordered regions lie at residues 338–537 (KGGN…TRKA), 558–593 (AVSV…ARGR), 886–908 (LNSV…WPEV), 960–996 (PPPA…QMTL), 1033–1075 (LNED…AQSL), 1165–1190 (HMAS…RSSV), 1221–1333 (QRQQ…TQVS), 1345–1374 (QEKL…KTIG), 1432–1463 (VHVR…GGAA), 1486–1508 (ARAN…GRDY), 1529–1559 (EQQQ…PPLE), 1573–1604 (KYKE…LPTH), 1637–1713 (SPLA…VDPP), and 1731–1757 (QLSH…LQLT). The span at 339–360 (GGNDHESVGTVRTTRDRAKREA) shows a compositional bias: basic and acidic residues. The segment covering 364–373 (QHHHNNHHSN) has biased composition (basic residues). Over residues 391–405 (ATATAAHQQRHQSQS) the composition is skewed to low complexity. Polar residues predominate over residues 419-428 (SGQQAASKTR). Low complexity-rich tracts occupy residues 429 to 439 (QQLQHQHNQQQ) and 453 to 474 (DATN…ASNG). S491, S492, and S494 each carry phosphoserine. The span at 507–518 (GSNGGSIGGGSV) shows a compositional bias: gly residues. Composition is skewed to basic residues over residues 526 to 535 (TQKKRKKLTR) and 582 to 593 (RKGRMKKGARGR). Residues 1221-1235 (QRQQMRVEEQQQQQQ) are compositionally biased toward low complexity. The segment covering 1236–1263 (HQHHHHHHHHHPQHRLPQHVQHQHPHQH) has biased composition (basic residues). Low complexity predominate over residues 1289-1300 (EPPQTQPLELLP). Residues S1318, S1324, and S1325 each carry the phosphoserine modification. The segment covering 1532–1545 (QKQSKGAGSAGSSS) has biased composition (low complexity). Residues 1574–1583 (YKEETEERQR) are compositionally biased toward basic and acidic residues. 2 stretches are compositionally biased toward low complexity: residues 1585 to 1598 (AAAA…PPAG) and 1681 to 1696 (HDAT…SSSS). A compositionally biased stretch (polar residues) spans 1697–1706 (CGRRSNSNNG).

This sequence belongs to the class I-like SAM-binding methyltransferase superfamily. DOT1 family. Broadly expressed in most tissues. Expressed in a large subset of neurons and in a small subset of glial cells.

Its subcellular location is the nucleus. The catalysed reaction is L-lysyl(79)-[histone H3] + 3 S-adenosyl-L-methionine = N(6),N(6),N(6)-trimethyl-L-lysyl(79)-[histone H3] + 3 S-adenosyl-L-homocysteine + 3 H(+). Functionally, histone methyltransferase. Methylates 'Lys-79' of histone H3. Required for Polycomb Group (PcG) and trithorax Group (trxG) maintenance of expression. Also involved in telomeric silencing but do not in centric heterochromatin. Probably participates in pairing sensitivity. This chain is Histone-lysine N-methyltransferase, H3 lysine-79 specific (gpp), found in Drosophila melanogaster (Fruit fly).